A 544-amino-acid chain; its full sequence is Tyrosine-protein kinase Yes (544 aa).

Residue Gly2 is the site of N-myristoyl glycine attachment. Residues 92–153 (GGVTFFVALY…PSNYVAPADS (62 aa)) form the SH3 domain. Residues 159 to 256 (WYFGKLSRKD…GLCYKLTTVC (98 aa)) enclose the SH2 domain. Positions 278–531 (LRLDVRLGQG…YIQSFLEDYF (254 aa)) constitute a Protein kinase domain. ATP-binding positions include 284–292 (LGQGCFGEV) and Lys306. The active-site Proton acceptor is Asp397. Residue Tyr427 is modified to Phosphotyrosine; by autocatalysis.

The protein belongs to the protein kinase superfamily. Tyr protein kinase family. SRC subfamily.

The enzyme catalyses L-tyrosyl-[protein] + ATP = O-phospho-L-tyrosyl-[protein] + ADP + H(+). The sequence is that of Tyrosine-protein kinase Yes (yes) from Xiphophorus hellerii (Green swordtail).